The chain runs to 162 residues: Cytochrome c-type biogenesis protein CcmE (162 aa).

The Cytoplasmic portion of the chain corresponds to 1 to 8 (MNPVRKKR). Residues 9-29 (LIIVLAILVGVGAAVGLALSA) form a helical; Signal-anchor for type II membrane protein membrane-spanning segment. Residues 30-162 (LQQNINLFYT…GETSYNQEGK (133 aa)) are Periplasmic-facing. Positions 124 and 128 each coordinate heme. A compositionally biased stretch (basic and acidic residues) spans 139 to 148 (DSGQLKHYEN). Residues 139 to 162 (DSGQLKHYENGKAAGETSYNQEGK) form a disordered region.

Belongs to the CcmE/CycJ family.

The protein resides in the cell inner membrane. Functionally, heme chaperone required for the biogenesis of c-type cytochromes. Transiently binds heme delivered by CcmC and transfers the heme to apo-cytochromes in a process facilitated by CcmF and CcmH. This chain is Cytochrome c-type biogenesis protein CcmE, found in Pseudomonas paraeruginosa (strain DSM 24068 / PA7) (Pseudomonas aeruginosa (strain PA7)).